The sequence spans 620 residues: Chaperone protein HscA homolog (620 aa).

It belongs to the heat shock protein 70 family.

Functionally, chaperone involved in the maturation of iron-sulfur cluster-containing proteins. Has a low intrinsic ATPase activity which is markedly stimulated by HscB. The polypeptide is Chaperone protein HscA homolog (Shewanella baltica (strain OS155 / ATCC BAA-1091)).